A 417-amino-acid polypeptide reads, in one-letter code: Transmembrane protease serine 11D (417 aa).

Residues methionine 1 to phenylalanine 17 lie on the Cytoplasmic side of the membrane. A helical; Signal-anchor for type II membrane protein transmembrane segment spans residues methionine 18–isoleucine 38. Residues histidine 39–isoleucine 417 are Extracellular-facing. An SEA domain is found at arginine 46–glutamine 162. Intrachain disulfides connect cysteine 172–cysteine 291, cysteine 211–cysteine 227, cysteine 336–cysteine 352, and cysteine 363–cysteine 392. One can recognise a Peptidase S1 domain in the interval isoleucine 186–glycine 416. Active-site charge relay system residues include histidine 226 and aspartate 271. Serine 367 serves as the catalytic Charge relay system.

It belongs to the peptidase S1 family. Monomer. Isoform 1 and isoform 2 are expressed in the esophagus, tongue and trachea. Isoform 2 is also highly expressed in the adrenal cortex and heart.

It localises to the cell membrane. The protein resides in the secreted. May play some biological role in the host defense system on the mucous membrane independently of or in cooperation with other substances in airway mucous or bronchial secretions. Plays a role in the proteolytic processing of ACE2. Preferentially cleaves the C-terminal side of arginine residues at the P1 position of certain peptides. Isoform 2 may play a key role in regulating adrenal proliferation by specifically cleaving N-POMC. This chain is Transmembrane protease serine 11D (Tmprss11d), found in Rattus norvegicus (Rat).